Here is a 266-residue protein sequence, read N- to C-terminus: NADP-dependent mannitol dehydrogenase (266 aa).

NADP(+)-binding residues include Thr-31, Ile-33, Asn-107, and Arg-140. Ser-159 functions as the Proton donor in the catalytic mechanism. Residues Tyr-174, Lys-178, Ile-206, and Thr-208 each contribute to the NADP(+) site. Catalysis depends on Tyr-174, which acts as the Proton acceptor. Lys-178 functions as the Lowers pKa of active site Tyr in the catalytic mechanism.

Belongs to the short-chain dehydrogenases/reductases (SDR) family. In terms of assembly, homotetramer.

The protein resides in the vacuole. The enzyme catalyses D-mannitol + NADP(+) = D-fructose + NADPH + H(+). The chain is NADP-dependent mannitol dehydrogenase from Alternaria alternata (Alternaria rot fungus).